The primary structure comprises 54 residues: Large ribosomal subunit protein bL33B (54 aa).

It belongs to the bacterial ribosomal protein bL33 family.

The sequence is that of Large ribosomal subunit protein bL33B (rpmG2) from Streptomyces coelicolor (strain ATCC BAA-471 / A3(2) / M145).